The following is a 246-amino-acid chain: V-type proton ATPase subunit D (246 aa).

Belongs to the V-ATPase D subunit family. In terms of assembly, V-ATPase is a heteromultimeric enzyme made up of two complexes: the ATP-hydrolytic V1 complex and the proton translocation V0 complex. The V1 complex consists of three catalytic AB heterodimers that form a heterohexamer, three peripheral stalks each consisting of EG heterodimers, one central rotor including subunits D and F, and the regulatory subunits C and H. The proton translocation complex V0 consists of the proton transport subunit a, a ring of proteolipid subunits c9c'', rotary subunit d, subunits e and f, and the accessory subunits VhaAC45 and ATP6AP2.

Functionally, subunit of the V1 complex of vacuolar(H+)-ATPase (V-ATPase), a multisubunit enzyme composed of a peripheral complex (V1) that hydrolyzes ATP and a membrane integral complex (V0) that translocates protons. V-ATPase is responsible for acidifying and maintaining the pH of intracellular compartments and in some cell types, is targeted to the plasma membrane, where it is responsible for acidifying the extracellular environment. This chain is V-type proton ATPase subunit D, found in Manduca sexta (Tobacco hawkmoth).